A 182-amino-acid chain; its full sequence is Transmembrane and coiled-coil domain-containing protein 2 (182 aa).

Helical transmembrane passes span 10 to 30 (IIIDYLSLSSIWNYLQATLLG) and 50 to 70 (VQVILGISFLILLGVGMYALW). The stretch at 122 to 149 (GLQEKILKKLQTVENKVKDLEGMIISQK) forms a coiled coil.

The protein resides in the membrane. The chain is Transmembrane and coiled-coil domain-containing protein 2 (TMCO2) from Bos taurus (Bovine).